A 367-amino-acid polypeptide reads, in one-letter code: Peptide chain release factor 2 (367 aa).

Position 250 is an N5-methylglutamine (Gln250).

Belongs to the prokaryotic/mitochondrial release factor family. Post-translationally, methylated by PrmC. Methylation increases the termination efficiency of RF2.

It localises to the cytoplasm. Peptide chain release factor 2 directs the termination of translation in response to the peptide chain termination codons UGA and UAA. This chain is Peptide chain release factor 2, found in Saccharopolyspora erythraea (strain ATCC 11635 / DSM 40517 / JCM 4748 / NBRC 13426 / NCIMB 8594 / NRRL 2338).